Consider the following 97-residue polypeptide: C-C motif chemokine 8 (97 aa).

The signal sequence occupies residues Met-1–Thr-23. Disulfide bonds link Cys-32–Cys-57 and Cys-33–Cys-73.

The protein belongs to the intercrine beta (chemokine CC) family. In terms of assembly, monomer or homodimer; in equilibrium.

The protein localises to the secreted. In terms of biological role, chemotactic factor that attracts monocytes. This protein can bind heparin. This chain is C-C motif chemokine 8 (Ccl8), found in Mus musculus (Mouse).